The chain runs to 114 residues: Small ribosomal subunit protein uS17 (114 aa).

It belongs to the universal ribosomal protein uS17 family. Part of the 30S ribosomal subunit.

In terms of biological role, one of the primary rRNA binding proteins, it binds specifically to the 5'-end of 16S ribosomal RNA. The chain is Small ribosomal subunit protein uS17 from Aeropyrum pernix (strain ATCC 700893 / DSM 11879 / JCM 9820 / NBRC 100138 / K1).